Consider the following 182-residue polypeptide: Adenine phosphoribosyltransferase (182 aa).

Belongs to the purine/pyrimidine phosphoribosyltransferase family. As to quaternary structure, homodimer.

It is found in the cytoplasm. The catalysed reaction is AMP + diphosphate = 5-phospho-alpha-D-ribose 1-diphosphate + adenine. Its pathway is purine metabolism; AMP biosynthesis via salvage pathway; AMP from adenine: step 1/1. Functionally, catalyzes a salvage reaction resulting in the formation of AMP, that is energically less costly than de novo synthesis. The sequence is that of Adenine phosphoribosyltransferase from Stutzerimonas stutzeri (Pseudomonas stutzeri).